Reading from the N-terminus, the 290-residue chain is HTH-type transcriptional activator RhaR (290 aa).

Residues 179–277 (DLIMSALQQS…GMTPRDYRQR (99 aa)) form the HTH araC/xylS-type domain. DNA-binding regions (H-T-H motif) lie at residues 196–217 (ANFC…RQQT) and 244–267 (ISDI…TREA).

As to quaternary structure, binds DNA as a dimer.

It is found in the cytoplasm. Functionally, activates expression of the rhaSR operon in response to L-rhamnose. The sequence is that of HTH-type transcriptional activator RhaR from Yersinia pseudotuberculosis serotype O:3 (strain YPIII).